The chain runs to 87 residues: Small ribosomal subunit protein bS20 (87 aa).

The segment covering 1–19 has biased composition (basic residues); it reads MANHKSALKRHRQSIKRNL. The segment at 1–22 is disordered; it reads MANHKSALKRHRQSIKRNLRNN.

Belongs to the bacterial ribosomal protein bS20 family.

Functionally, binds directly to 16S ribosomal RNA. This chain is Small ribosomal subunit protein bS20, found in Maridesulfovibrio salexigens (strain ATCC 14822 / DSM 2638 / NCIMB 8403 / VKM B-1763) (Desulfovibrio salexigens).